The following is a 279-amino-acid chain: MATH domain and coiled-coil domain-containing protein At1g31390 (279 aa).

In terms of domain architecture, MATH spans 6-134 (EKKITWTIKN…NGDVKIVVEV (129 aa)). Residues 235–271 (KLDWLEKKLKEVCEARVQEIDEEWKDLTDLKENWSSD) adopt a coiled-coil conformation.

The chain is MATH domain and coiled-coil domain-containing protein At1g31390 from Arabidopsis thaliana (Mouse-ear cress).